Consider the following 526-residue polypeptide: NAD(P)H-quinone oxidoreductase subunit 2 (526 aa).

The next 14 membrane-spanning stretches (helical) occupy residues Ile16–Val36, Trp43–Trp63, Leu80–Val100, Gly107–Leu127, Leu133–Tyr153, Leu168–Leu188, Leu211–Val231, Pro245–Ile265, Trp279–Leu299, Met307–Thr327, Ile335–Phe355, Leu379–Gly399, Ile401–Ile421, and Leu469–Ile489.

It belongs to the complex I subunit 2 family. In terms of assembly, NDH-1 can be composed of about 15 different subunits; different subcomplexes with different compositions have been identified which probably have different functions.

The protein resides in the cellular thylakoid membrane. The enzyme catalyses a plastoquinone + NADH + (n+1) H(+)(in) = a plastoquinol + NAD(+) + n H(+)(out). It catalyses the reaction a plastoquinone + NADPH + (n+1) H(+)(in) = a plastoquinol + NADP(+) + n H(+)(out). Functionally, NDH-1 shuttles electrons from an unknown electron donor, via FMN and iron-sulfur (Fe-S) centers, to quinones in the respiratory and/or the photosynthetic chain. The immediate electron acceptor for the enzyme in this species is believed to be plastoquinone. Couples the redox reaction to proton translocation, and thus conserves the redox energy in a proton gradient. Cyanobacterial NDH-1 also plays a role in inorganic carbon-concentration. This Picosynechococcus sp. (strain ATCC 27264 / PCC 7002 / PR-6) (Agmenellum quadruplicatum) protein is NAD(P)H-quinone oxidoreductase subunit 2.